Here is a 325-residue protein sequence, read N- to C-terminus: Phosphate acyltransferase (325 aa).

It belongs to the PlsX family. In terms of assembly, homodimer. Probably interacts with PlsY.

It localises to the cytoplasm. The enzyme catalyses a fatty acyl-[ACP] + phosphate = an acyl phosphate + holo-[ACP]. It functions in the pathway lipid metabolism; phospholipid metabolism. Its function is as follows. Catalyzes the reversible formation of acyl-phosphate (acyl-PO(4)) from acyl-[acyl-carrier-protein] (acyl-ACP). This enzyme utilizes acyl-ACP as fatty acyl donor, but not acyl-CoA. The sequence is that of Phosphate acyltransferase from Mycoplasmopsis pulmonis (strain UAB CTIP) (Mycoplasma pulmonis).